A 200-amino-acid chain; its full sequence is MSFTGTQQKCRACEKTVYPVELLSADGISYHKACFKCSHCKSRLQLSNYSSMEGVVYCRPHFEQLFKESGSFSKNFQSPAKPLTDKPTPELNRTPSRLAGMFSGTQDKCATCTKTVYPIEKVTVESQCYHKSCFKCSHGGCPISPSNYAALEGILYCKHHFAQLFKEKGSYNHLIKSASIKRATAAATAAAAAVAAVPES.

LIM zinc-binding domains follow at residues 8 to 68 (QKCR…LFKE) and 107 to 167 (DKCA…LFKE).

As to quaternary structure, interacts with F-actin. In terms of tissue distribution, expressed in roots, leaves, stems, flowers and siliques. Barely detected in pollen.

It localises to the cytoplasm. The protein localises to the cytoskeleton. In terms of biological role, binds to actin filaments and promotes cross-linking into thick bundles. Has an actin-stabilizing activity. The actin regulatory activities are not regulated by pH and [Ca(2+)]. This is LIM domain-containing protein WLIM2a from Arabidopsis thaliana (Mouse-ear cress).